The sequence spans 960 residues: Phosphoenolpyruvate carboxylase 2 (960 aa).

Catalysis depends on residues H167 and K595.

Belongs to the PEPCase type 1 family. In terms of assembly, homotetramer. The cofactor is Mg(2+).

The protein resides in the cytoplasm. The enzyme catalyses oxaloacetate + phosphate = phosphoenolpyruvate + hydrogencarbonate. It participates in photosynthesis; C3 acid pathway. Through the carboxylation of phosphoenolpyruvate (PEP) it forms oxaloacetate, a four-carbon dicarboxylic acid source for the tricarboxylic acid cycle. The sequence is that of Phosphoenolpyruvate carboxylase 2 from Sorghum bicolor (Sorghum).